The chain runs to 390 residues: Enoyl-[acyl-carrier-protein] reductase [NADH], chloroplastic (390 aa).

The transit peptide at 1–74 (MAATAASSLQ…CKRPFSFSTR (74 aa)) directs the protein to the chloroplast. Positions 53 and 170 each coordinate NADP(+). Ser-239 acts as the Proton donor in catalysis. Residues Lys-282 and Ser-314 each contribute to the NADP(+) site. Lys-282 (lowers pKa of active site Tyr) is an active-site residue.

This sequence belongs to the short-chain dehydrogenases/reductases (SDR) family. FabI subfamily. In terms of assembly, homotetramer. Expressed in flowers and siliques and at lower levels in roots and leaves (at protein level).

Its subcellular location is the plastid. It localises to the chloroplast. The enzyme catalyses a 2,3-saturated acyl-[ACP] + NAD(+) = a (2E)-enoyl-[ACP] + NADH + H(+). It participates in lipid metabolism; fatty acid biosynthesis. Its activity is regulated as follows. Inhibited by the phytotoxin cyperin and the synthetic antimicrobial compound triclosan. In terms of biological role, catalyzes the NAD-dependent reduction of a carbon-carbon double bond in an enoyl moiety that is covalently linked to an acyl carrier protein (ACP). Catalyzes the last reduction step in the de novo synthesis cycle of fatty acids. Involved in the elongation cycle of fatty acids which are used in lipid metabolism. Required for normal plant growth. The sequence is that of Enoyl-[acyl-carrier-protein] reductase [NADH], chloroplastic (MOD1) from Arabidopsis thaliana (Mouse-ear cress).